A 209-amino-acid chain; its full sequence is Dehydration-responsive element-binding protein 1F (209 aa).

A Nuclear localization signal motif is present at residues 14–26 (KKRAGRRVFKETR). Residues 29–86 (VYRGIRRRNGDKWVCEVREPTHQRRIWLGTYPTADMAARAHDVAVLALRGRSACLNFA) constitute a DNA-binding region (AP2/ERF). The interval 137–157 (FGSGSGSGSGSEERNSSSYGF) is disordered.

The protein belongs to the AP2/ERF transcription factor family. ERF subfamily.

The protein localises to the nucleus. Its function is as follows. Transcriptional activator that binds specifically to the DNA sequence 5'-[AG]CCGAC-3'. Binding to the C-repeat/DRE element mediates cold or dehydration-inducible transcription. CBF/DREB1 factors play a key role in freezing tolerance and cold acclimation. The polypeptide is Dehydration-responsive element-binding protein 1F (DREB1F) (Arabidopsis thaliana (Mouse-ear cress)).